A 333-amino-acid polypeptide reads, in one-letter code: UDP-glucose 4-epimerase (333 aa).

Residues 11–12 (YI), 32–37 (DSLVTG), 52–53 (DL), 75–79 (FAAYS), Asn94, Thr119, Tyr143, Lys147, and Phe171 each bind NAD(+). Thr119 and Tyr143 together coordinate substrate. The active-site Proton acceptor is Tyr143. Substrate contacts are provided by residues Asn172, 191–192 (HL), 208–210 (MIF), Arg223, and 284–287 (RSGD).

It belongs to the NAD(P)-dependent epimerase/dehydratase family. Homodimer. It depends on NAD(+) as a cofactor.

It carries out the reaction UDP-alpha-D-glucose = UDP-alpha-D-galactose. It participates in carbohydrate metabolism; galactose metabolism. Functionally, involved in the metabolism of galactose. Catalyzes the conversion of UDP-galactose (UDP-Gal) to UDP-glucose (UDP-Glc) through a mechanism involving the transient reduction of NAD. The sequence is that of UDP-glucose 4-epimerase (galE) from Streptococcus mutans serotype c (strain ATCC 700610 / UA159).